Reading from the N-terminus, the 346-residue chain is Glucose-6-phosphatase 3 (346 aa).

At 1-25 the chain is on the lumenal side; that stretch reads MESTLSAGIMMAEALQNQLPGLENM. A helical membrane pass occupies residues 26–46; sequence WLWVTFLADPKNLFQFYFPAV. Over 47 to 56 the chain is Cytoplasmic; that stretch reads YYASRRLGIS. Residues 57–77 form a helical membrane-spanning segment; the sequence is LFWIAFITEWLNLVFKWFLFG. Residues 78-115 are Lumenal-facing; it reads DRPFWWVHESGYSAQTPVQIHQFPSSCETGPGSPSGHC. Substrate is bound at residue R79. H114 acts as the Proton donor in catalysis. A helical membrane pass occupies residues 116–135; that stretch reads MITGAALWPVMIAISSQVAS. Topologically, residues 136-140 are cytoplasmic; that stretch reads QTRSP. A helical transmembrane segment spans residues 141–162; sequence WVRVIPGLAYCTFLLAVGLSRV. R161 provides a ligand contact to substrate. Topologically, residues 163–167 are lumenal; sequence FLLAH. The active-site Nucleophile is the H167. The helical transmembrane segment at 168–186 threads the bilayer; it reads FPHQVLAGLLAGVILGWLL. Residues 187–197 lie on the Cytoplasmic side of the membrane; the sequence is SPRVPMERELS. Residues 198-218 form a helical membrane-spanning segment; sequence FYGLTALTLMLGASLMYWTLF. Over 219–254 the chain is Lumenal; the sequence is TLGLDLSWSINLASKWCDRPEWVLVDSRPFASLSRD. A helical transmembrane segment spans residues 255–273; sequence SGSALGLGIALHTPCYAQI. Residues 274-283 are Cytoplasmic-facing; the sequence is RRVHLGNGQK. A helical transmembrane segment spans residues 284 to 304; that stretch reads IACFVLAMGLLVFLEWLGHPP. Over 305–307 the chain is Lumenal; that stretch reads QIS. A helical membrane pass occupies residues 308–328; the sequence is LFYIFNFLKFTLWPCLVVALV. Over 329 to 346 the chain is Cytoplasmic; it reads PWMVHTLSAQEAPPIRSS.

This sequence belongs to the glucose-6-phosphatase family. Expressed in liver and kidney. It is the major glucose-6-phosphatase expressed in the small intestine.

Its subcellular location is the endoplasmic reticulum membrane. It catalyses the reaction D-glucose 6-phosphate + H2O = D-glucose + phosphate. The protein operates within carbohydrate biosynthesis; gluconeogenesis. Its activity is regulated as follows. Inhibited by vanadate. In terms of biological role, hydrolyzes glucose-6-phosphate to glucose in the endoplasmic reticulum. May form with the glucose-6-phosphate transporter (SLC37A4/G6PT) a ubiquitously expressed complex responsible for glucose production through glycogenolysis and gluconeogenesis. Probably required for normal neutrophil function. The polypeptide is Glucose-6-phosphatase 3 (G6pc3) (Rattus norvegicus (Rat)).